The following is a 138-amino-acid chain: Large ribosomal subunit protein uL16 (138 aa).

A compositionally biased stretch (basic residues) spans 1-17 (MLIPRRVKHRKQHHPTR). Residues 1–24 (MLIPRRVKHRKQHHPTRRGAASGG) form a disordered region.

Belongs to the universal ribosomal protein uL16 family. As to quaternary structure, part of the 50S ribosomal subunit.

Binds 23S rRNA and is also seen to make contacts with the A and possibly P site tRNAs. The polypeptide is Large ribosomal subunit protein uL16 (Kineococcus radiotolerans (strain ATCC BAA-149 / DSM 14245 / SRS30216)).